We begin with the raw amino-acid sequence, 466 residues long: tRNA modification GTPase MnmE (466 aa).

(6S)-5-formyl-5,6,7,8-tetrahydrofolate contacts are provided by Arg25, Glu82, and Lys127. Residues Gly223 to Gly388 form the TrmE-type G domain. Position 233 (Asn233) interacts with K(+). Residues Asn233–Ser238, Thr252–Thr258, Asp277–Gly280, Asn346–Asp349, and Ser369–Arg371 contribute to the GTP site. Mg(2+) is bound at residue Ser237. The K(+) site is built by Thr252, Ile254, and Thr257. Thr258 provides a ligand contact to Mg(2+). Residue Lys466 participates in (6S)-5-formyl-5,6,7,8-tetrahydrofolate binding.

The protein belongs to the TRAFAC class TrmE-Era-EngA-EngB-Septin-like GTPase superfamily. TrmE GTPase family. Homodimer. Heterotetramer of two MnmE and two MnmG subunits. The cofactor is K(+).

It is found in the cytoplasm. Functionally, exhibits a very high intrinsic GTPase hydrolysis rate. Involved in the addition of a carboxymethylaminomethyl (cmnm) group at the wobble position (U34) of certain tRNAs, forming tRNA-cmnm(5)s(2)U34. The sequence is that of tRNA modification GTPase MnmE from Acidovorax sp. (strain JS42).